The primary structure comprises 192 residues: ADP-ribose glycohydrolase AF_1521 (192 aa).

Residues 1-192 (MEVLFEAKVG…VALKVFERSL (192 aa)) enclose the Macro domain. Residues 19–21 (GDI), 32–34 (AAN), 39–44 (HGGGVA), and 140–146 (VSAGIYG) contribute to the substrate site.

The catalysed reaction is 5-O-(ADP-D-ribosyl)-L-glutamyl-[protein] + H2O = L-glutamyl-[protein] + ADP-D-ribose + H(+). It carries out the reaction 4-O-(ADP-D-ribosyl)-L-aspartyl-[protein] + H2O = L-aspartyl-[protein] + ADP-D-ribose + H(+). It catalyses the reaction alpha-NAD(+) + H2O = ADP-D-ribose + nicotinamide + H(+). Its function is as follows. Removes ADP-ribose from aspartate and glutamate residues in proteins bearing a single ADP-ribose moiety. Inactive towards proteins bearing poly-ADP-ribose. Catalyzes removal of a phosphate group from ADP-ribose 1''-phosphate (Appr1p), but with low efficiency. This chain is ADP-ribose glycohydrolase AF_1521, found in Archaeoglobus fulgidus (strain ATCC 49558 / DSM 4304 / JCM 9628 / NBRC 100126 / VC-16).